Consider the following 399-residue polypeptide: Phosphoglycerate kinase (399 aa).

Substrate is bound by residues Asp-21–Asn-23, Arg-36, His-59–Arg-62, Arg-120, and Arg-158. ATP-binding positions include Lys-209, Gly-297, Glu-328, and Gly-355–Ser-358.

This sequence belongs to the phosphoglycerate kinase family. In terms of assembly, monomer.

The protein resides in the cytoplasm. The enzyme catalyses (2R)-3-phosphoglycerate + ATP = (2R)-3-phospho-glyceroyl phosphate + ADP. It functions in the pathway carbohydrate degradation; glycolysis; pyruvate from D-glyceraldehyde 3-phosphate: step 2/5. The sequence is that of Phosphoglycerate kinase from Streptococcus thermophilus (strain ATCC BAA-491 / LMD-9).